The primary structure comprises 955 residues: 2-oxoglutarate dehydrogenase E1 component (955 aa).

The protein belongs to the alpha-ketoglutarate dehydrogenase family. Homodimer. Part of the 2-oxoglutarate dehydrogenase (OGDH) complex composed of E1 (2-oxoglutarate dehydrogenase), E2 (dihydrolipoamide succinyltransferase) and E3 (dihydrolipoamide dehydrogenase); the complex contains multiple copies of the three enzymatic components (E1, E2 and E3). The cofactor is thiamine diphosphate.

The catalysed reaction is N(6)-[(R)-lipoyl]-L-lysyl-[protein] + 2-oxoglutarate + H(+) = N(6)-[(R)-S(8)-succinyldihydrolipoyl]-L-lysyl-[protein] + CO2. Its function is as follows. E1 component of the 2-oxoglutarate dehydrogenase (OGDH) complex which catalyzes the decarboxylation of 2-oxoglutarate, the first step in the conversion of 2-oxoglutarate to succinyl-CoA and CO(2). This Bacillus cereus (strain AH820) protein is 2-oxoglutarate dehydrogenase E1 component.